Here is a 132-residue protein sequence, read N- to C-terminus: Holo-[acyl-carrier-protein] synthase (132 aa).

Positions 8 and 64 each coordinate Mg(2+).

This sequence belongs to the P-Pant transferase superfamily. AcpS family. Requires Mg(2+) as cofactor.

The protein localises to the cytoplasm. The catalysed reaction is apo-[ACP] + CoA = holo-[ACP] + adenosine 3',5'-bisphosphate + H(+). In terms of biological role, transfers the 4'-phosphopantetheine moiety from coenzyme A to a Ser of acyl-carrier-protein. The protein is Holo-[acyl-carrier-protein] synthase of Shewanella woodyi (strain ATCC 51908 / MS32).